Reading from the N-terminus, the 384-residue chain is Dual-specificity RNA methyltransferase RlmN (384 aa).

E105 acts as the Proton acceptor in catalysis. The 240-residue stretch at 111 to 350 (EDDRATLCVS…TIVRKTRGDD (240 aa)) folds into the Radical SAM core domain. The cysteines at positions 118 and 355 are disulfide-linked. Residues C125, C129, and C132 each coordinate [4Fe-4S] cluster. Residues 179–180 (GE), S211, 233–235 (SLH), and N312 contribute to the S-adenosyl-L-methionine site. C355 serves as the catalytic S-methylcysteine intermediate.

It belongs to the radical SAM superfamily. RlmN family. [4Fe-4S] cluster is required as a cofactor.

Its subcellular location is the cytoplasm. The enzyme catalyses adenosine(2503) in 23S rRNA + 2 reduced [2Fe-2S]-[ferredoxin] + 2 S-adenosyl-L-methionine = 2-methyladenosine(2503) in 23S rRNA + 5'-deoxyadenosine + L-methionine + 2 oxidized [2Fe-2S]-[ferredoxin] + S-adenosyl-L-homocysteine. The catalysed reaction is adenosine(37) in tRNA + 2 reduced [2Fe-2S]-[ferredoxin] + 2 S-adenosyl-L-methionine = 2-methyladenosine(37) in tRNA + 5'-deoxyadenosine + L-methionine + 2 oxidized [2Fe-2S]-[ferredoxin] + S-adenosyl-L-homocysteine. In terms of biological role, specifically methylates position 2 of adenine 2503 in 23S rRNA and position 2 of adenine 37 in tRNAs. m2A2503 modification seems to play a crucial role in the proofreading step occurring at the peptidyl transferase center and thus would serve to optimize ribosomal fidelity. The sequence is that of Dual-specificity RNA methyltransferase RlmN from Escherichia coli O6:H1 (strain CFT073 / ATCC 700928 / UPEC).